A 612-amino-acid chain; its full sequence is uncharacterized protein (612 aa).

6 consecutive transmembrane segments (helical) span residues 13-33 (IPLT…EWLP), 38-58 (AILV…EGIA), 67-87 (TIMA…IQII), 107-127 (GFIV…AIFL), 144-164 (LLIP…LGTS), and 189-209 (LGLL…PILL). RCK C-terminal domains lie at 218–302 (GNVA…ERGI) and 316–403 (NNAG…LLVL). Helical transmembrane passes span 419 to 439 (AIAI…PISV), 459 to 479 (IYGA…PLGT), 501 to 521 (LSGY…TEIL), 525 to 545 (ATVV…GLNP), 546 to 566 (LAFM…PIGY), and 586 to 606 (IGAP…MLIY).

The protein belongs to the SLC13A/DASS transporter (TC 2.A.47) family. NADC subfamily.

The protein localises to the cell membrane. This is an uncharacterized protein from Synechocystis sp. (strain ATCC 27184 / PCC 6803 / Kazusa).